The chain runs to 331 residues: ADP,ATP carrier protein 1, mitochondrial (331 aa).

Solcar repeat units lie at residues 29-122 (KNFA…FKRM), 134-226 (KWFG…LKPV), and 238-320 (ASFA…LQIL). 5 helical membrane-spanning segments follow: residues 31–58 (FAIDFLMGGVSAAVSKTAAAPIERVKLL), 99–123 (TANVIRYFPTQALNFAFKDYFKRMF), 132–152 (YWKWFGGNLASGGAAGASSLF), 202–223 (FNISCVGIIVYRGLYFGLYDSL), and 237–257 (FASFALGWLITNGAGLASYPI). ADP contacts are provided by Arg-104 and Lys-116. Arg-261 contacts ADP. Residues 261–266 (RRRMMM) form an important for transport activity region. Residues 261–266 (RRRMMM) carry the Nucleotide carrier signature motif motif. The chain crosses the membrane as a helical span at residues 297 to 317 (AGANILRAIAGAGVLSGYDQL).

This sequence belongs to the mitochondrial carrier (TC 2.A.29) family. In terms of assembly, monomer.

The protein resides in the mitochondrion inner membrane. The catalysed reaction is ADP(in) + ATP(out) = ADP(out) + ATP(in). With respect to regulation, the matrix-open state (m-state) is inhibited by the membrane-permeable bongkrekic acid (BKA). The cytoplasmic-open state (c-state) is inhibited by the membrane-impermeable toxic inhibitor carboxyatractyloside (CATR). ADP:ATP antiporter that mediates import of ADP into the mitochondrial matrix for ATP synthesis, and export of ATP out to fuel the cell. Cycles between the cytoplasmic-open state (c-state) and the matrix-open state (m-state): operates by the alternating access mechanism with a single substrate-binding site intermittently exposed to either the cytosolic (c-state) or matrix (m-state) side of the inner mitochondrial membrane. In Triticum aestivum (Wheat), this protein is ADP,ATP carrier protein 1, mitochondrial (ANT-G1).